The chain runs to 325 residues: tRNA dimethylallyltransferase (325 aa).

16-23 (GPTASGKT) is an ATP binding site. Residue 18–23 (TASGKT) coordinates substrate. Interaction with substrate tRNA regions lie at residues 41–44 (DSAL), 165–169 (QRIQR), 253–258 (RCVGYR), and 286–293 (KRQITWLR).

Belongs to the IPP transferase family. Monomer. Mg(2+) is required as a cofactor.

It catalyses the reaction adenosine(37) in tRNA + dimethylallyl diphosphate = N(6)-dimethylallyladenosine(37) in tRNA + diphosphate. Functionally, catalyzes the transfer of a dimethylallyl group onto the adenine at position 37 in tRNAs that read codons beginning with uridine, leading to the formation of N6-(dimethylallyl)adenosine (i(6)A). In Ralstonia pickettii (strain 12J), this protein is tRNA dimethylallyltransferase.